The chain runs to 265 residues: Oxidoreductase nsrR (265 aa).

This sequence belongs to the avfA family.

Its pathway is secondary metabolite biosynthesis. Functionally, oxidoreductase; part of the gene cluster that mediates the biosynthesis of the tetrahydroxanthone dimer neosartorin, which exhibits antibacterial activity. The two different monomeric units appear to be synthesized by the same set of enzymes, among which the Baeyer-Villiger monooxygenase nsrF is the key enzyme for the divergence of the biosynthetic routes. The pathway begins with the synthesis of atrochrysone thioester by the polyketide synthase nsrB. The atrochrysone carboxyl ACP thioesterase nsrC then breaks the thioester bond and releases the atrochrysone carboxylic acid from AacuL. Atrochrysone carboxylic acid is decarboxylated by the decarboxylase nsrE, and oxidized by the anthrone oxygenase nsrD to yield emodin. Emodin is then reduced to emodin hydroquinone by the oxidoreductase nsrR. A-ring reduction by the short chain dehydrogenase nsrJ, dehydration by the scytalone dehydratase-like protein nsrI and probable spontaneous re-oxidation, results in overall deoxygenation to chrysophanol. The Baeyer-Villiger monooxygenase nsrF accepts chrysophanol as a substrate to insert one oxygen atom at two different positions to yield the precursors of both monomric units. NsrF is promiscuous/flexible in interacting with the 2 (non methylated and methylated) aromatic rings of chrysophanol, thus diverging the biosynthetic pathway at this point. After the hydrolysis of the lactones, methylesterification by the methyltransferase nsrG yields respectively moniliphenone and 2,2',6'-trihydroxy-4-methyl-6-methoxya-cyldiphenylmethanone. The next steps are the hydroxylation by the FAD-dependent monooxygenase nsrK, followed by isomerization by the monooxygenase nsrQ. The short chain dehydrogenase/reductase nsrO then catalyzes the C-5 ketoreduction to give the xanthone skeleton of blennolide C and 5-acetylblennolide A. The acetyltransferase nsrL has a strict substrate specificity and uses only blennolide A but not blennolide C to yield 5-acetylblennolide A as the single-acetylated product. In the final step of the biosynthesis, the heterodimerization of the 2 xanthones, blennolide C and 5-acetylblennolide A, is catalyzed by the cytochrome P450 monooxygenase nsrP. NsrP can utilize at least three different xanthones as its substrates to perform the dimerization reaction. The sequence is that of Oxidoreductase nsrR from Aspergillus novofumigatus (strain IBT 16806).